Consider the following 366-residue polypeptide: Anthranilate phosphoribosyltransferase (366 aa).

Residues Gly79, 82–83 (GD), Thr87, 89–92 (NIST), 107–115 (KHGNRAATS), and Ser119 contribute to the 5-phospho-alpha-D-ribose 1-diphosphate site. Residue Gly79 participates in anthranilate binding. Ser91 contributes to the Mg(2+) binding site. Anthranilate is bound at residue Asn110. Arg165 lines the anthranilate pocket. Mg(2+)-binding residues include Asp223 and Glu224. The interval 342–366 (ESLSGKSMSMRSRTSILSPASGERV) is disordered. Over residues 345–359 (SGKSMSMRSRTSILS) the composition is skewed to polar residues.

The protein belongs to the anthranilate phosphoribosyltransferase family. In terms of assembly, homodimer. Mg(2+) serves as cofactor.

It catalyses the reaction N-(5-phospho-beta-D-ribosyl)anthranilate + diphosphate = 5-phospho-alpha-D-ribose 1-diphosphate + anthranilate. It participates in amino-acid biosynthesis; L-tryptophan biosynthesis; L-tryptophan from chorismate: step 2/5. In terms of biological role, catalyzes the transfer of the phosphoribosyl group of 5-phosphorylribose-1-pyrophosphate (PRPP) to anthranilate to yield N-(5'-phosphoribosyl)-anthranilate (PRA). This is Anthranilate phosphoribosyltransferase from Methanosarcina barkeri (strain Fusaro / DSM 804).